Here is a 257-residue protein sequence, read N- to C-terminus: UPF0246 protein YaaA (257 aa).

It belongs to the UPF0246 family.

This is UPF0246 protein YaaA from Salmonella choleraesuis (strain SC-B67).